The sequence spans 425 residues: Serine--tRNA ligase (425 aa).

231–233 (TAE) provides a ligand contact to L-serine. 262 to 264 (RSE) is an ATP binding site. Glu285 provides a ligand contact to L-serine. 349–352 (EISS) is an ATP binding site. L-serine is bound at residue Ser385.

The protein belongs to the class-II aminoacyl-tRNA synthetase family. Type-1 seryl-tRNA synthetase subfamily. As to quaternary structure, homodimer. The tRNA molecule binds across the dimer.

The protein resides in the cytoplasm. The catalysed reaction is tRNA(Ser) + L-serine + ATP = L-seryl-tRNA(Ser) + AMP + diphosphate + H(+). The enzyme catalyses tRNA(Sec) + L-serine + ATP = L-seryl-tRNA(Sec) + AMP + diphosphate + H(+). It participates in aminoacyl-tRNA biosynthesis; selenocysteinyl-tRNA(Sec) biosynthesis; L-seryl-tRNA(Sec) from L-serine and tRNA(Sec): step 1/1. Its function is as follows. Catalyzes the attachment of serine to tRNA(Ser). Is also able to aminoacylate tRNA(Sec) with serine, to form the misacylated tRNA L-seryl-tRNA(Sec), which will be further converted into selenocysteinyl-tRNA(Sec). This Desulfosudis oleivorans (strain DSM 6200 / JCM 39069 / Hxd3) (Desulfococcus oleovorans) protein is Serine--tRNA ligase.